The primary structure comprises 350 residues: Anthranilate phosphoribosyltransferase (350 aa).

5-phospho-alpha-D-ribose 1-diphosphate-binding positions include glycine 94, glycine 97–serine 98, threonine 102, asparagine 104–threonine 107, lysine 122–serine 130, and serine 134. Glycine 94 lines the anthranilate pocket. Position 106 (serine 106) interacts with Mg(2+). Asparagine 125 is a binding site for anthranilate. Residue arginine 180 coordinates anthranilate. 2 residues coordinate Mg(2+): aspartate 239 and glutamate 240.

Belongs to the anthranilate phosphoribosyltransferase family. Homodimer. It depends on Mg(2+) as a cofactor.

It carries out the reaction N-(5-phospho-beta-D-ribosyl)anthranilate + diphosphate = 5-phospho-alpha-D-ribose 1-diphosphate + anthranilate. It functions in the pathway amino-acid biosynthesis; L-tryptophan biosynthesis; L-tryptophan from chorismate: step 2/5. Catalyzes the transfer of the phosphoribosyl group of 5-phosphorylribose-1-pyrophosphate (PRPP) to anthranilate to yield N-(5'-phosphoribosyl)-anthranilate (PRA). The protein is Anthranilate phosphoribosyltransferase of Geotalea uraniireducens (strain Rf4) (Geobacter uraniireducens).